A 296-amino-acid chain; its full sequence is Phosphoribosylaminoimidazole-succinocarboxamide synthase (296 aa).

It belongs to the SAICAR synthetase family.

It catalyses the reaction 5-amino-1-(5-phospho-D-ribosyl)imidazole-4-carboxylate + L-aspartate + ATP = (2S)-2-[5-amino-1-(5-phospho-beta-D-ribosyl)imidazole-4-carboxamido]succinate + ADP + phosphate + 2 H(+). Its pathway is purine metabolism; IMP biosynthesis via de novo pathway; 5-amino-1-(5-phospho-D-ribosyl)imidazole-4-carboxamide from 5-amino-1-(5-phospho-D-ribosyl)imidazole-4-carboxylate: step 1/2. The sequence is that of Phosphoribosylaminoimidazole-succinocarboxamide synthase from Pelobacter propionicus (strain DSM 2379 / NBRC 103807 / OttBd1).